The primary structure comprises 337 residues: Aspartate carbamoyltransferase catalytic subunit (337 aa).

Carbamoyl phosphate contacts are provided by Arg54 and Thr55. Position 82 (Lys82) interacts with L-aspartate. Residues Arg104, His134, and Gln137 each coordinate carbamoyl phosphate. Residues Arg177 and Arg232 each contribute to the L-aspartate site. Positions 277 and 278 each coordinate carbamoyl phosphate.

This sequence belongs to the aspartate/ornithine carbamoyltransferase superfamily. ATCase family. Heterododecamer (2C3:3R2) of six catalytic PyrB chains organized as two trimers (C3), and six regulatory PyrI chains organized as three dimers (R2).

The catalysed reaction is carbamoyl phosphate + L-aspartate = N-carbamoyl-L-aspartate + phosphate + H(+). It participates in pyrimidine metabolism; UMP biosynthesis via de novo pathway; (S)-dihydroorotate from bicarbonate: step 2/3. Its function is as follows. Catalyzes the condensation of carbamoyl phosphate and aspartate to form carbamoyl aspartate and inorganic phosphate, the committed step in the de novo pyrimidine nucleotide biosynthesis pathway. This is Aspartate carbamoyltransferase catalytic subunit from Arthrobacter sp. (strain FB24).